The primary structure comprises 68 residues: Large ribosomal subunit protein uL29 (68 aa).

Belongs to the universal ribosomal protein uL29 family.

This chain is Large ribosomal subunit protein uL29, found in Erythrobacter litoralis (strain HTCC2594).